A 557-amino-acid chain; its full sequence is Leucine-rich glioma-inactivated protein 1 (557 aa).

An N-terminal signal peptide occupies residues 1-34 (MESERSKRMGNACIPLKRIAYFLCLLSALLLTEG). The 38-residue stretch at 35 to 72 (KKPAKPKCPAVCTCTKDNALCENARSIPRTVPPDVISL) folds into the LRRNT domain. LRR repeat units follow at residues 92-113 (SLQL…AFIG), 116-137 (HLEY…TFRG), and 140-161 (SLIH…IFKG). Residues 173-223 (NSFNCDCKLKWLVEWLGHTNATVEDIYCEGPPEYKKRKINSLSSKDFDCII) enclose the LRRCT domain. N-linked (GlcNAc...) asparagine glycosylation occurs at asparagine 192. 7 EAR repeats span residues 225 to 267 (EFAK…EWDH), 271 to 313 (TFRN…KRDS), 317 to 364 (KFIK…KWNG), 366 to 415 (GFYS…QWNK), 419 to 462 (LFTN…KWGG), 464 to 506 (SFQD…NWDA), and 510 to 552 (KFVK…KHVI). N-linked (GlcNAc...) asparagine glycosylation occurs at asparagine 277. Residue asparagine 422 is glycosylated (N-linked (GlcNAc...) asparagine).

In terms of assembly, oligomer. Interacts with KCNA1 within a complex containing KCNA1, KCNA4 and KCNAB1. Part of a complex containing ADAM22, DLG4/PSD95 and CACNG2/Stargazin. Can bind to ADAM11 and ADAM23. In terms of processing, glycosylated. As to expression, predominantly expressed in neural tissues, especially in brain. Expression is reduced in low-grade brain tumors and significantly reduced or absent in malignant gliomas. Expressed in the occipital cortex and hippocampus; higher amounts are observed in the parietal and frontal cortices, putamen, and, particularly, in the temporal neocortex, where it is between 3 and 5 times more abundant than in the hippocampus (at protein level). Expression is absent in the cerebellum. In terms of tissue distribution, abundantly expressed in the occipital cortex and weakly expressed in the hippocampus (at protein level).

The protein resides in the secreted. Its subcellular location is the synapse. It is found in the cytoplasm. The protein localises to the golgi apparatus. It localises to the endoplasmic reticulum. Regulates voltage-gated potassium channels assembled from KCNA1, KCNA4 and KCNAB1. It slows down channel inactivation by precluding channel closure mediated by the KCNAB1 subunit. Ligand for ADAM22 that positively regulates synaptic transmission mediated by AMPA-type glutamate receptors. Plays a role in suppressing the production of MMP1/3 through the phosphatidylinositol 3-kinase/ERK pathway. May play a role in the control of neuroblastoma cell survival. The sequence is that of Leucine-rich glioma-inactivated protein 1 (LGI1) from Homo sapiens (Human).